The primary structure comprises 166 residues: Large ribosomal subunit protein mL49 (166 aa).

Positions 54–77 (PTKIPEPPKHKHYPTPSGWQPPRD) are disordered.

This sequence belongs to the mitochondrion-specific ribosomal protein mL49 family. In terms of assembly, component of the mitochondrial ribosome large subunit (39S) which comprises a 16S rRNA and about 50 distinct proteins. Interacts with OXA1L.

It localises to the mitochondrion. The polypeptide is Large ribosomal subunit protein mL49 (Mrpl49) (Mus musculus (Mouse)).